Reading from the N-terminus, the 209-residue chain is Orotate phosphoribosyltransferase (209 aa).

Residues R96, K100, H102, and E122–S130 each bind 5-phospho-alpha-D-ribose 1-diphosphate. Position 126 (S126) interacts with orotate.

It belongs to the purine/pyrimidine phosphoribosyltransferase family. PyrE subfamily. As to quaternary structure, homodimer. Mg(2+) is required as a cofactor.

It catalyses the reaction orotidine 5'-phosphate + diphosphate = orotate + 5-phospho-alpha-D-ribose 1-diphosphate. Its pathway is pyrimidine metabolism; UMP biosynthesis via de novo pathway; UMP from orotate: step 1/2. In terms of biological role, catalyzes the transfer of a ribosyl phosphate group from 5-phosphoribose 1-diphosphate to orotate, leading to the formation of orotidine monophosphate (OMP). The polypeptide is Orotate phosphoribosyltransferase (Streptococcus pyogenes serotype M12 (strain MGAS2096)).